Consider the following 602-residue polypeptide: Auxin response factor 18 (602 aa).

The TF-B3 DNA-binding region spans 128-230 (FVKILTASDT…DLRVGVRRLA (103 aa)). The interval 359–396 (TSPISTPAQQPQSKCKRSRPIEPSVKTPAPPSFLYSLP) is disordered. The segment covering 360–371 (SPISTPAQQPQS) has biased composition (polar residues). In terms of domain architecture, PB1 spans 489–581 (RSRTKVQMQG…EVKKMTTKLK (93 aa)).

It belongs to the ARF family. As to quaternary structure, homodimers and heterodimers.

It is found in the nucleus. In terms of biological role, auxin response factors (ARFs) are transcriptional factors that bind specifically to the DNA sequence 5'-TGTCTC-3' found in the auxin-responsive promoter elements (AuxREs). Could act as transcriptional activator or repressor. Formation of heterodimers with Aux/IAA proteins may alter their ability to modulate early auxin response genes expression. The sequence is that of Auxin response factor 18 (ARF18) from Arabidopsis thaliana (Mouse-ear cress).